The primary structure comprises 66 residues: DNA gyrase inhibitor YacG (66 aa).

4 residues coordinate Zn(2+): Cys-9, Cys-12, Cys-28, and Cys-32. The tract at residues 45–66 is disordered; it reads HKIAGSQESEDELYSGDLEPRH.

It belongs to the DNA gyrase inhibitor YacG family. As to quaternary structure, interacts with GyrB. Zn(2+) is required as a cofactor.

In terms of biological role, inhibits all the catalytic activities of DNA gyrase by preventing its interaction with DNA. Acts by binding directly to the C-terminal domain of GyrB, which probably disrupts DNA binding by the gyrase. The sequence is that of DNA gyrase inhibitor YacG from Pseudomonas putida (strain W619).